Here is a 687-residue protein sequence, read N- to C-terminus: Methionine--tRNA ligase (687 aa).

Residues 14 to 24 (PYANGYIHLGH) carry the 'HIGH' region motif. Zn(2+) contacts are provided by Cys-145, Cys-148, Cys-158, and Cys-161. A 'KMSKS' region motif is present at residues 329–333 (KMSKS). Residue Lys-332 coordinates ATP. The tRNA-binding domain maps to 585–687 (DFDKVDLRIG…DGAQVGQRVK (103 aa)).

This sequence belongs to the class-I aminoacyl-tRNA synthetase family. MetG type 1 subfamily. As to quaternary structure, homodimer. It depends on Zn(2+) as a cofactor.

Its subcellular location is the cytoplasm. It carries out the reaction tRNA(Met) + L-methionine + ATP = L-methionyl-tRNA(Met) + AMP + diphosphate. Is required not only for elongation of protein synthesis but also for the initiation of all mRNA translation through initiator tRNA(fMet) aminoacylation. The polypeptide is Methionine--tRNA ligase (Bdellovibrio bacteriovorus (strain ATCC 15356 / DSM 50701 / NCIMB 9529 / HD100)).